A 458-amino-acid polypeptide reads, in one-letter code: Probable mitochondrial chaperone BCS1-B (458 aa).

The Mitochondrial intermembrane segment spans residues 1–26; it reads MENVITNNNKGLPKSILKFIPEPIQP. The chain crosses the membrane as a helical span at residues 27-47; it reads LFENPFFSAGFGLIGVGSILA. The Mitochondrial matrix segment spans residues 48–458; sequence MGRKGFQQAM…INNLNELIKK (411 aa). 248-255 contacts ATP; the sequence is GPPGTGKS.

Belongs to the AAA ATPase family. BCS1 subfamily.

It is found in the mitochondrion inner membrane. The enzyme catalyses ATP + H2O = ADP + phosphate + H(+). Functionally, chaperone necessary for the assembly of mitochondrial respiratory chain complex III. The polypeptide is Probable mitochondrial chaperone BCS1-B (bcsl1b) (Dictyostelium discoideum (Social amoeba)).